A 101-amino-acid polypeptide reads, in one-letter code: Cilia- and flagella-associated protein 141 (101 aa).

Microtubule inner protein component of sperm flagellar doublet microtubules. As to expression, expressed in trachea multiciliated cells.

It localises to the cytoplasm. Its subcellular location is the cytoskeleton. It is found in the cilium axoneme. The protein resides in the flagellum axoneme. Microtubule inner protein (MIP) part of the dynein-decorated doublet microtubules (DMTs) in cilia axoneme, which is required for motile cilia beating. The chain is Cilia- and flagella-associated protein 141 from Bos taurus (Bovine).